A 510-amino-acid chain; its full sequence is tRNA-2-methylthio-N(6)-dimethylallyladenosine synthase (510 aa).

The tract at residues 1-25 (MSGFNDSPVPESAEKADGLLSQERG) is disordered. The MTTase N-terminal domain maps to 34–154 (RKLFVKSYGC…LPDLLRRVAH (121 aa)). Residues Cys43, Cys79, Cys117, Cys195, Cys199, and Cys202 each coordinate [4Fe-4S] cluster. One can recognise a Radical SAM core domain in the interval 181 to 414 (AERGVGAFVT…QALLEEQRQA (234 aa)). The TRAM domain occupies 417–479 (KAMIGRVLPV…PNSFHGRLLA (63 aa)). Residues 484 to 493 (QESAQGQESA) are compositionally biased toward polar residues. The interval 484-510 (QESAQGQESAQGMERMEQNARAWEVPV) is disordered.

Belongs to the methylthiotransferase family. MiaB subfamily. Monomer. It depends on [4Fe-4S] cluster as a cofactor.

It is found in the cytoplasm. It carries out the reaction N(6)-dimethylallyladenosine(37) in tRNA + (sulfur carrier)-SH + AH2 + 2 S-adenosyl-L-methionine = 2-methylsulfanyl-N(6)-dimethylallyladenosine(37) in tRNA + (sulfur carrier)-H + 5'-deoxyadenosine + L-methionine + A + S-adenosyl-L-homocysteine + 2 H(+). In terms of biological role, catalyzes the methylthiolation of N6-(dimethylallyl)adenosine (i(6)A), leading to the formation of 2-methylthio-N6-(dimethylallyl)adenosine (ms(2)i(6)A) at position 37 in tRNAs that read codons beginning with uridine. This is tRNA-2-methylthio-N(6)-dimethylallyladenosine synthase from Beijerinckia indica subsp. indica (strain ATCC 9039 / DSM 1715 / NCIMB 8712).